The following is a 319-amino-acid chain: DNA-directed RNA polymerase subunit alpha (319 aa).

The interval 1–227 (MKEFIFPMKI…KHMNMLTNIS (227 aa)) is alpha N-terminal domain (alpha-NTD). An alpha C-terminal domain (alpha-CTD) region spans residues 242–319 (LMEKLTFSIE…NIGEQRSSEV (78 aa)).

Belongs to the RNA polymerase alpha chain family. As to quaternary structure, homodimer. The RNAP catalytic core consists of 2 alpha, 1 beta, 1 beta' and 1 omega subunit. When a sigma factor is associated with the core the holoenzyme is formed, which can initiate transcription.

The enzyme catalyses RNA(n) + a ribonucleoside 5'-triphosphate = RNA(n+1) + diphosphate. DNA-dependent RNA polymerase catalyzes the transcription of DNA into RNA using the four ribonucleoside triphosphates as substrates. The polypeptide is DNA-directed RNA polymerase subunit alpha (Hydrogenobaculum sp. (strain Y04AAS1)).